Here is a 586-residue protein sequence, read N- to C-terminus: CTP synthase (586 aa).

An amidoligase domain region spans residues 1 to 265; the sequence is MVRFIFVTGG…ENKVLNFFNI (265 aa). Serine 13 provides a ligand contact to CTP. UTP is bound at residue serine 13. ATP contacts are provided by residues 14-19 and aspartate 71; that span reads SLGKGI. Mg(2+) is bound by residues aspartate 71 and glutamate 139. CTP-binding positions include 146–148, 186–191, and lysine 222; these read DIE and KTKPTQ. Residues 186-191 and lysine 222 contribute to the UTP site; that span reads KTKPTQ. The Glutamine amidotransferase type-1 domain occupies 290–582; it reads KIAIITKYHK…IKATIEYNKS (293 aa). Residue glycine 352 coordinates L-glutamine. Cysteine 379 functions as the Nucleophile; for glutamine hydrolysis in the catalytic mechanism. Residues 380–383 and glutamate 403 each bind L-glutamine; that span reads FGMQ. The region spanning 429 to 473 is the RPE1 insert domain; sequence AHISKCTYSEAFECDASTVYTNIHEDSNNLSTDKLQIETNFRNMS. An L-glutamine-binding site is contributed by arginine 510. Catalysis depends on residues histidine 555 and glutamate 557.

Belongs to the CTP synthase family. In terms of assembly, homotetramer.

The enzyme catalyses UTP + L-glutamine + ATP + H2O = CTP + L-glutamate + ADP + phosphate + 2 H(+). It carries out the reaction L-glutamine + H2O = L-glutamate + NH4(+). The catalysed reaction is UTP + NH4(+) + ATP = CTP + ADP + phosphate + 2 H(+). It functions in the pathway pyrimidine metabolism; CTP biosynthesis via de novo pathway; CTP from UDP: step 2/2. Allosterically activated by GTP, when glutamine is the substrate; GTP has no effect on the reaction when ammonia is the substrate. The allosteric effector GTP functions by stabilizing the protein conformation that binds the tetrahedral intermediate(s) formed during glutamine hydrolysis. Inhibited by the product CTP, via allosteric rather than competitive inhibition. Catalyzes the ATP-dependent amination of UTP to CTP with either L-glutamine or ammonia as the source of nitrogen. Regulates intracellular CTP levels through interactions with the four ribonucleotide triphosphates. This Rickettsia prowazekii (strain Madrid E) protein is CTP synthase.